The sequence spans 190 residues: Dynein axonemal light chain 1 (190 aa).

LRR repeat units lie at residues 49 to 70, 71 to 92, 94 to 115, and 116 to 137; these read VCEK…NGLK, NLKI…EAVG, SLEE…HVLK, and KLKV…NKLQ. The 41-residue stretch at 150–190 folds into the LRRCT domain; that stretch reads NPLEEKHSAEGDWQDRVTKSLKALKKLDGTPIIKNDEEEED.

The protein belongs to the dynein light chain LC1-type family. Interacts with DNAH5, a outer arm dynein heavy chain. Interacts with tubulin located within the A-tubule of the outer doublets in a ATP-independent manner.

It localises to the cytoplasm. It is found in the cytoskeleton. The protein resides in the cilium axoneme. Functionally, part of the multisubunit axonemal ATPase complexes that generate the force for cilia motility and govern beat frequency. Component of the outer arm dynein (ODA). May be involved in a mechanosensory feedback mechanism controlling ODA activity based on external conformational cues by tethering the outer arm dynein heavy chain (DNAH5) to the microtubule within the axoneme. This chain is Dynein axonemal light chain 1 (DNAL1), found in Ciona intestinalis (Transparent sea squirt).